The primary structure comprises 539 residues: GMP synthase [glutamine-hydrolyzing] (539 aa).

Positions 4-202 (KILILDFGSQ…VLGIAGCKPD (199 aa)) constitute a Glutamine amidotransferase type-1 domain. Cys81 (nucleophile) is an active-site residue. Active-site residues include His176 and Glu178. A GMPS ATP-PPase domain is found at 203–395 (WVMRDHIEEA…LGLPPEMVYR (193 aa)). 230 to 236 (SGGVDSS) provides a ligand contact to ATP.

In terms of assembly, homodimer.

The enzyme catalyses XMP + L-glutamine + ATP + H2O = GMP + L-glutamate + AMP + diphosphate + 2 H(+). It participates in purine metabolism; GMP biosynthesis; GMP from XMP (L-Gln route): step 1/1. Its function is as follows. Catalyzes the synthesis of GMP from XMP. This is GMP synthase [glutamine-hydrolyzing] from Cupriavidus necator (strain ATCC 17699 / DSM 428 / KCTC 22496 / NCIMB 10442 / H16 / Stanier 337) (Ralstonia eutropha).